We begin with the raw amino-acid sequence, 452 residues long: Argininosuccinate lyase (452 aa).

Positions 431–452 (AFRKDSTGSTSPKWSFRAMRRA) are disordered.

Belongs to the lyase 1 family. Argininosuccinate lyase subfamily.

Its subcellular location is the cytoplasm. The enzyme catalyses 2-(N(omega)-L-arginino)succinate = fumarate + L-arginine. It functions in the pathway amino-acid biosynthesis; L-arginine biosynthesis; L-arginine from L-ornithine and carbamoyl phosphate: step 3/3. In Tremblaya princeps, this protein is Argininosuccinate lyase.